Reading from the N-terminus, the 559-residue chain is Polypeptide N-acetylgalactosaminyltransferase 1 (559 aa).

At 1 to 8 (MRKFAYCK) the chain is on the cytoplasmic side. A helical; Signal-anchor for type II membrane protein transmembrane segment spans residues 9-28 (VVLATSLIWVLLDMFLLLYF). The Lumenal segment spans residues 29-559 (SECNKCDEKK…LRNVTLPEIF (531 aa)). The disordered stretch occupies residues 45-65 (GDVLEPVQKPHEGPGEMGKPV). A glycan (N-linked (GlcNAc...) asparagine) is linked at asparagine 95. Disulfide bonds link cysteine 106–cysteine 339, cysteine 330–cysteine 408, cysteine 442–cysteine 459, cysteine 482–cysteine 497, and cysteine 523–cysteine 540. Residues 115–225 (LPTTSVVIVF…VGWLEPLLAR (111 aa)) are catalytic subdomain A. Residues aspartate 156 and arginine 186 each contribute to the substrate site. Residues aspartate 209 and histidine 211 each contribute to the Mn(2+) site. Positions 285 to 347 (PVRTPTMAGG…TCSHVGHVFR (63 aa)) are catalytic subdomain B. Tryptophan 316 is a binding site for substrate. Histidine 344 contributes to the Mn(2+) binding site. Positions 347 and 352 each coordinate substrate. Residues 429 to 551 (FSLGEIRNVE…GSRSQQWLLR (123 aa)) form the Ricin B-type lectin domain. The N-linked (GlcNAc...) asparagine glycan is linked to asparagine 552.

It belongs to the glycosyltransferase 2 family. GalNAc-T subfamily. Requires Mn(2+) as cofactor. In terms of tissue distribution, widely expressed. Expressed in all tissues tested.

It localises to the golgi apparatus. It is found in the golgi stack membrane. Its subcellular location is the secreted. The catalysed reaction is L-seryl-[protein] + UDP-N-acetyl-alpha-D-galactosamine = a 3-O-[N-acetyl-alpha-D-galactosaminyl]-L-seryl-[protein] + UDP + H(+). It carries out the reaction L-threonyl-[protein] + UDP-N-acetyl-alpha-D-galactosamine = a 3-O-[N-acetyl-alpha-D-galactosaminyl]-L-threonyl-[protein] + UDP + H(+). It participates in protein modification; protein glycosylation. Functionally, catalyzes the initial reaction in O-linked oligosaccharide biosynthesis, the transfer of an N-acetyl-D-galactosamine residue to a serine or threonine residue on the protein receptor. Has a broad spectrum of substrates such as apomucin-, MUC5AC-, MUC1- and MUC2-derived peptides. The sequence is that of Polypeptide N-acetylgalactosaminyltransferase 1 from Homo sapiens (Human).